The following is a 934-amino-acid chain: 2-oxoglutarate dehydrogenase E1 component (934 aa).

Belongs to the alpha-ketoglutarate dehydrogenase family. Homodimer. Part of the 2-oxoglutarate dehydrogenase (OGDH) complex composed of E1 (2-oxoglutarate dehydrogenase), E2 (dihydrolipoamide succinyltransferase) and E3 (dihydrolipoamide dehydrogenase); the complex contains multiple copies of the three enzymatic components (E1, E2 and E3). Thiamine diphosphate is required as a cofactor.

The catalysed reaction is N(6)-[(R)-lipoyl]-L-lysyl-[protein] + 2-oxoglutarate + H(+) = N(6)-[(R)-S(8)-succinyldihydrolipoyl]-L-lysyl-[protein] + CO2. In terms of biological role, E1 component of the 2-oxoglutarate dehydrogenase (OGDH) complex which catalyzes the decarboxylation of 2-oxoglutarate, the first step in the conversion of 2-oxoglutarate to succinyl-CoA and CO(2). This chain is 2-oxoglutarate dehydrogenase E1 component (sucA), found in Coxiella burnetii (strain RSA 493 / Nine Mile phase I).